Here is a 158-residue protein sequence, read N- to C-terminus: MAGPPDSDLDDVARIRLVLARELETINEYEAYARASSNPEVRAFFQHLAAEEKEHVSEAVHMLRMLDSGQNDHFAKPFVPGHFQAAEAPAPATVHVPTPDGPAFSVNGRNGRLPSEPPTSLPPQRLLYGLPAPPPAVESHPLTVGSLRRGGGGSGSGR.

Positions 22, 52, and 55 each coordinate Fe cation. Short sequence motifs (di-iron-binding motif) lie at residues 52–55 (EKEH) and 58–61 (EAVH). The segment at 92–158 (ATVHVPTPDG…RGGGGSGSGR (67 aa)) is disordered. Residues 142-149 (LTVGSLRR) are probable targeting peptide. Over residues 148-158 (RRGGGGSGSGR) the composition is skewed to gly residues.

The protein belongs to the ferritin-like superfamily.

The protein localises to the encapsulin nanocompartment. Cargo protein of a type 1 encapsulin nanocompartment. May help nucleate Fe atoms in the interior of the encapsulin nanocompartment. Present in about 36 copies/encapsulin nanocompartment. This Myxococcus xanthus (strain DK1622) protein is Encapsulin nanocompartment cargo protein EncB.